Here is a 459-residue protein sequence, read N- to C-terminus: Exodeoxyribonuclease 7 large subunit (459 aa).

Belongs to the XseA family. In terms of assembly, heterooligomer composed of large and small subunits.

The protein resides in the cytoplasm. The enzyme catalyses Exonucleolytic cleavage in either 5'- to 3'- or 3'- to 5'-direction to yield nucleoside 5'-phosphates.. Its function is as follows. Bidirectionally degrades single-stranded DNA into large acid-insoluble oligonucleotides, which are then degraded further into small acid-soluble oligonucleotides. The sequence is that of Exodeoxyribonuclease 7 large subunit from Pseudomonas syringae pv. tomato (strain ATCC BAA-871 / DC3000).